The following is a 275-amino-acid chain: 4-diphosphocytidyl-2-C-methyl-D-erythritol kinase (275 aa).

K14 is a catalytic residue. An ATP-binding site is contributed by 98 to 108 (PMGAGLGGGSS). D140 is an active-site residue.

It belongs to the GHMP kinase family. IspE subfamily.

The enzyme catalyses 4-CDP-2-C-methyl-D-erythritol + ATP = 4-CDP-2-C-methyl-D-erythritol 2-phosphate + ADP + H(+). It participates in isoprenoid biosynthesis; isopentenyl diphosphate biosynthesis via DXP pathway; isopentenyl diphosphate from 1-deoxy-D-xylulose 5-phosphate: step 3/6. In terms of biological role, catalyzes the phosphorylation of the position 2 hydroxy group of 4-diphosphocytidyl-2C-methyl-D-erythritol. This Francisella tularensis subsp. novicida (strain U112) protein is 4-diphosphocytidyl-2-C-methyl-D-erythritol kinase.